A 343-amino-acid chain; its full sequence is Pentatricopeptide repeat-containing protein At1g06270 (343 aa).

PPR repeat units lie at residues 98-133, 134-169, 170-204, 205-240, 241-275, and 276-310; these read PKIV…GCLP, NPQT…GYSP, DTGT…GCIP, DVES…GISP, RKGM…DYPV, and EFES…GFIP.

This sequence belongs to the PPR family. P subfamily.

This is Pentatricopeptide repeat-containing protein At1g06270 from Arabidopsis thaliana (Mouse-ear cress).